Consider the following 188-residue polypeptide: dCTP deaminase (188 aa).

109-114 (KSTYAR) is a binding site for dCTP. Glu-135 functions as the Proton donor/acceptor in the catalytic mechanism. Positions 154, 168, and 178 each coordinate dCTP.

This sequence belongs to the dCTP deaminase family. As to quaternary structure, homotrimer.

The catalysed reaction is dCTP + H2O + H(+) = dUTP + NH4(+). It functions in the pathway pyrimidine metabolism; dUMP biosynthesis; dUMP from dCTP (dUTP route): step 1/2. Functionally, catalyzes the deamination of dCTP to dUTP. This chain is dCTP deaminase, found in Helicobacter pylori (strain G27).